We begin with the raw amino-acid sequence, 83 residues long: SPbeta prophage-derived uncharacterized protein YopE (83 aa).

2 helical membrane-spanning segments follow: residues 5 to 25 (AYFL…FIFV) and 60 to 80 (VIAF…TKLF).

The protein resides in the cell membrane. The protein is SPbeta prophage-derived uncharacterized protein YopE (yopE) of Bacillus subtilis (strain 168).